The following is a 280-amino-acid chain: Beta carbonic anhydrase 4 (280 aa).

N-acetylalanine is present on alanine 2. A coiled-coil region spans residues 47–76 (NVAAAKIKALTAELKELDSSNSDAIERIKT). The residue at position 57 (threonine 57) is a Phosphothreonine. Serine 117 is subject to Phosphoserine. Cysteine 223 bears the S-nitrosocysteine mark.

This sequence belongs to the beta-class carbonic anhydrase family. As to quaternary structure, interacts with DTX56. As to expression, strongly expressed in aerial tissues including leaves, stems, flowers and siliques. Accumulates in both guard cells and mesophyll cells.

Its subcellular location is the cell membrane. The enzyme catalyses hydrogencarbonate + H(+) = CO2 + H2O. Functionally, reversible hydration of carbon dioxide. Together with BCA1, involved in the CO(2) signaling pathway which controls gas-exchange between plants and the atmosphere by modulating stomatal development and movements. Promotes water use efficiency. The chain is Beta carbonic anhydrase 4 from Arabidopsis thaliana (Mouse-ear cress).